Reading from the N-terminus, the 179-residue chain is Adenine phosphoribosyltransferase (179 aa).

The protein belongs to the purine/pyrimidine phosphoribosyltransferase family. As to quaternary structure, homodimer.

It is found in the cytoplasm. It carries out the reaction AMP + diphosphate = 5-phospho-alpha-D-ribose 1-diphosphate + adenine. It participates in purine metabolism; AMP biosynthesis via salvage pathway; AMP from adenine: step 1/1. Catalyzes a salvage reaction resulting in the formation of AMP, that is energically less costly than de novo synthesis. The protein is Adenine phosphoribosyltransferase of Haemophilus ducreyi (strain 35000HP / ATCC 700724).